The chain runs to 332 residues: Phospho-N-acetylmuramoyl-pentapeptide-transferase (332 aa).

10 helical membrane passes run 3 to 23 (FALMSGLVAFLATVLLIPRFI), 52 to 72 (MGGTVFLVVAILVSLLFATAF), 74 to 94 (LLTGGVLAILFILALYGVVGF), 115 to 135 (LALQILGGIVFYFVHVRGAGG), 140 to 160 (VFGHMVHLGVLYFPFVLFWLV), 172 to 192 (IDGLASISVVISLLAYSVIAF), 197 to 217 (FDILLVCVTMIGGLLGFFVYN), 223 to 243 (IFMGDVGSLALGGMLATISIA), 248 to 268 (WTLLLIGLVYVIETSSVMLQV), and 311 to 331 (VDFFLWSVGLIMSLITLAILY).

This sequence belongs to the glycosyltransferase 4 family. MraY subfamily. The cofactor is Mg(2+).

The protein resides in the cell membrane. It carries out the reaction UDP-N-acetyl-alpha-D-muramoyl-L-alanyl-gamma-D-glutamyl-L-lysyl-D-alanyl-D-alanine + di-trans,octa-cis-undecaprenyl phosphate = Mur2Ac(oyl-L-Ala-gamma-D-Glu-L-Lys-D-Ala-D-Ala)-di-trans,octa-cis-undecaprenyl diphosphate + UMP. The protein operates within cell wall biogenesis; peptidoglycan biosynthesis. Its function is as follows. Catalyzes the initial step of the lipid cycle reactions in the biosynthesis of the cell wall peptidoglycan: transfers peptidoglycan precursor phospho-MurNAc-pentapeptide from UDP-MurNAc-pentapeptide onto the lipid carrier undecaprenyl phosphate, yielding undecaprenyl-pyrophosphoryl-MurNAc-pentapeptide, known as lipid I. The polypeptide is Phospho-N-acetylmuramoyl-pentapeptide-transferase (Streptococcus suis (strain 98HAH33)).